The primary structure comprises 51 residues: ATP synthase F(1) complex subunit epsilon, mitochondrial (51 aa).

3 positions are modified to N6-acetyllysine; alternate: Lys21, Lys32, and Lys37. Lys21, Lys32, and Lys37 each carry N6-succinyllysine; alternate. Lys44 is subject to N6-acetyllysine.

This sequence belongs to the eukaryotic ATPase epsilon family. In terms of assembly, component of the ATP synthase complex composed at least of ATP5F1A/subunit alpha, ATP5F1B/subunit beta, ATP5MC1/subunit c (homooctomer), MT-ATP6/subunit a, MT-ATP8/subunit 8, ATP5ME/subunit e, ATP5MF/subunit f, ATP5MG/subunit g, ATP5MK/subunit k, ATP5MJ/subunit j, ATP5F1C/subunit gamma, ATP5F1D/subunit delta, ATP5F1E/subunit epsilon, ATP5PF/subunit F6, ATP5PB/subunit b, ATP5PD/subunit d, ATP5PO/subunit OSCP. ATP synthase complex consists of a soluble F(1) head domain (subunits alpha(3) and beta(3)) - the catalytic core - and a membrane F(0) domain - the membrane proton channel (subunits c, a, 8, e, f, g, k and j). These two domains are linked by a central stalk (subunits gamma, delta, and epsilon) rotating inside the F1 region and a stationary peripheral stalk (subunits F6, b, d, and OSCP).

It is found in the mitochondrion. Its subcellular location is the mitochondrion inner membrane. Functionally, subunit epsilon, of the mitochondrial membrane ATP synthase complex (F(1)F(0) ATP synthase or Complex V) that produces ATP from ADP in the presence of a proton gradient across the membrane which is generated by electron transport complexes of the respiratory chain. ATP synthase complex consist of a soluble F(1) head domain - the catalytic core - and a membrane F(1) domain - the membrane proton channel. These two domains are linked by a central stalk rotating inside the F(1) region and a stationary peripheral stalk. During catalysis, ATP synthesis in the catalytic domain of F(1) is coupled via a rotary mechanism of the central stalk subunits to proton translocation. In vivo, can only synthesize ATP although its ATP hydrolase activity can be activated artificially in vitro. May be essential for the assembly of F(1) and may play an important role in the incorporation of the hydrophobic subunit c into the F(1)-c oligomer rotor of the mitochondrial ATP synthase complex. This Rattus norvegicus (Rat) protein is ATP synthase F(1) complex subunit epsilon, mitochondrial.